A 173-amino-acid polypeptide reads, in one-letter code: ATP synthase subunit b (173 aa).

A helical membrane pass occupies residues 12–32 (LDVNPGLVVWTLVTFLVVVLV).

The protein belongs to the ATPase B chain family. In terms of assembly, F-type ATPases have 2 components, F(1) - the catalytic core - and F(0) - the membrane proton channel. F(1) has five subunits: alpha(3), beta(3), gamma(1), delta(1), epsilon(1). F(0) has three main subunits: a(1), b(2) and c(10-14). The alpha and beta chains form an alternating ring which encloses part of the gamma chain. F(1) is attached to F(0) by a central stalk formed by the gamma and epsilon chains, while a peripheral stalk is formed by the delta and b chains.

The protein resides in the cell inner membrane. In terms of biological role, f(1)F(0) ATP synthase produces ATP from ADP in the presence of a proton or sodium gradient. F-type ATPases consist of two structural domains, F(1) containing the extramembraneous catalytic core and F(0) containing the membrane proton channel, linked together by a central stalk and a peripheral stalk. During catalysis, ATP synthesis in the catalytic domain of F(1) is coupled via a rotary mechanism of the central stalk subunits to proton translocation. Component of the F(0) channel, it forms part of the peripheral stalk, linking F(1) to F(0). The protein is ATP synthase subunit b of Leptospira interrogans serogroup Icterohaemorrhagiae serovar copenhageni (strain Fiocruz L1-130).